The primary structure comprises 289 residues: Golgi to ER traffic protein 2 (289 aa).

Positions 1-10 (MSEVSEAEKR) are enriched in basic and acidic residues. Residues 1-68 (MSEVSEAEKR…LQRGSNSGQS (68 aa)) form a disordered region. Residues 1–153 (MSEVSEAEKR…VGVHQFQVRQ (153 aa)) are Cytoplasmic-facing. The span at 11–21 (RILREKRKQKF) shows a compositional bias: basic residues. The span at 33 to 68 (ITTQQPGGASGDSTVTSAEISDNEGSLQRGSNSGQS) shows a compositional bias: polar residues. Residues 154–173 (LKAYMLLLRWAILLPFIYYV) traverse the membrane as a helical segment. At 174-196 (MHPGTAHWLHTSRFLHFVMEPRN) the chain is on the lumenal side. The helical transmembrane segment at 197–216 (FFMVFTTFEVASISIYYQVL) threads the bilayer. At 217–263 (LTLERTNKVNSLSYSSKLVTWAGLVPDGMLPIDNLQGKVVVALHYWD) the chain is on the cytoplasmic side. A helical membrane pass occupies residues 264–284 (ILSMYLTDLSLCLVAAGLMKY). The Lumenal portion of the chain corresponds to 285–289 (YHAAP).

This sequence belongs to the GET2 family. In terms of assembly, component of the Golgi to ER traffic (GET) complex, which is composed of GET1, GET2 and GET3. Within the complex, GET1 and GET2 form a heterotetramer which is stabilized by phosphatidylinositol binding and which binds to the GET3 homodimer.

It localises to the endoplasmic reticulum membrane. Its subcellular location is the golgi apparatus membrane. Its function is as follows. Required for the post-translational delivery of tail-anchored (TA) proteins to the endoplasmic reticulum. Together with GET1, acts as a membrane receptor for soluble GET3, which recognizes and selectively binds the transmembrane domain of TA proteins in the cytosol. The GET complex cooperates with the HDEL receptor ERD2 to mediate the ATP-dependent retrieval of resident ER proteins that contain a C-terminal H-D-E-L retention signal from the Golgi to the ER. This chain is Golgi to ER traffic protein 2, found in Eremothecium gossypii (strain ATCC 10895 / CBS 109.51 / FGSC 9923 / NRRL Y-1056) (Yeast).